The primary structure comprises 251 residues: Imidazole glycerol phosphate synthase subunit HisF (251 aa).

Residues Asp-13 and Asp-132 contribute to the active site.

The protein belongs to the HisA/HisF family. In terms of assembly, heterodimer of HisH and HisF.

It localises to the cytoplasm. It catalyses the reaction 5-[(5-phospho-1-deoxy-D-ribulos-1-ylimino)methylamino]-1-(5-phospho-beta-D-ribosyl)imidazole-4-carboxamide + L-glutamine = D-erythro-1-(imidazol-4-yl)glycerol 3-phosphate + 5-amino-1-(5-phospho-beta-D-ribosyl)imidazole-4-carboxamide + L-glutamate + H(+). It functions in the pathway amino-acid biosynthesis; L-histidine biosynthesis; L-histidine from 5-phospho-alpha-D-ribose 1-diphosphate: step 5/9. In terms of biological role, IGPS catalyzes the conversion of PRFAR and glutamine to IGP, AICAR and glutamate. The HisF subunit catalyzes the cyclization activity that produces IGP and AICAR from PRFAR using the ammonia provided by the HisH subunit. This chain is Imidazole glycerol phosphate synthase subunit HisF, found in Campylobacter concisus (strain 13826).